Reading from the N-terminus, the 69-residue chain is Large ribosomal subunit protein uL29 (69 aa).

The protein belongs to the universal ribosomal protein uL29 family.

This Rhodopseudomonas palustris (strain BisB5) protein is Large ribosomal subunit protein uL29.